The following is an 829-amino-acid chain: Periplasmic nitrate reductase (829 aa).

Positions 1–30 (MKMTRRAFVKANAAASAAAVAGITLPASAA) form a signal peptide, tat-type signal. The 4Fe-4S Mo/W bis-MGD-type domain maps to 41–97 (ITWDKAPCRFCGTGCSVLVGTQNGKVVATQGDPEAPVNKGLNCIKGYFLSKIMYGQD). Positions 48, 51, 55, and 83 each coordinate [4Fe-4S] cluster. Residues lysine 85, glutamine 152, asparagine 177, cysteine 181, 214–221 (WGSNMAEM), 245–249 (STYYH), 264–266 (QSD), methionine 374, glutamine 378, asparagine 484, 510–511 (SD), lysine 533, aspartate 560, and 718–727 (TGRVLEHWHT) contribute to the Mo-bis(molybdopterin guanine dinucleotide) site. Residue phenylalanine 794 participates in substrate binding. Residues asparagine 802 and lysine 819 each contribute to the Mo-bis(molybdopterin guanine dinucleotide) site.

The protein belongs to the prokaryotic molybdopterin-containing oxidoreductase family. NasA/NapA/NarB subfamily. In terms of assembly, component of the periplasmic nitrate reductase NapAB complex composed of NapA and NapB. The cofactor is [4Fe-4S] cluster. Mo-bis(molybdopterin guanine dinucleotide) is required as a cofactor. Post-translationally, predicted to be exported by the Tat system. The position of the signal peptide cleavage has not been experimentally proven.

It is found in the periplasm. The catalysed reaction is 2 Fe(II)-[cytochrome] + nitrate + 2 H(+) = 2 Fe(III)-[cytochrome] + nitrite + H2O. Catalytic subunit of the periplasmic nitrate reductase complex NapAB. Receives electrons from NapB and catalyzes the reduction of nitrate to nitrite. The chain is Periplasmic nitrate reductase from Vibrio vulnificus (strain YJ016).